Consider the following 191-residue polypeptide: Probable DNA-directed RNA polymerase subunit delta (191 aa).

In terms of domain architecture, HTH HARE-type spans 14 to 83 (LSMIEVARAI…GENKWGLRSW (70 aa)). The tract at residues 118-191 (DEDAIDYRDD…EDEEDEEPVL (74 aa)) is disordered.

It belongs to the RpoE family. As to quaternary structure, RNAP is composed of a core of 2 alpha, a beta and a beta' subunits. The core is associated with a delta subunit and one of several sigma factors.

Functionally, participates in both the initiation and recycling phases of transcription. In the presence of the delta subunit, RNAP displays an increased specificity of transcription, a decreased affinity for nucleic acids, and an increased efficiency of RNA synthesis because of enhanced recycling. The sequence is that of Probable DNA-directed RNA polymerase subunit delta from Streptococcus pyogenes serotype M18 (strain MGAS8232).